A 184-amino-acid polypeptide reads, in one-letter code: ATP synthase subunit b, chloroplastic (184 aa).

Residues 27–49 (LATNPINLSVVLGVLIFFGKGVL) form a helical membrane-spanning segment.

The protein belongs to the ATPase B chain family. As to quaternary structure, F-type ATPases have 2 components, F(1) - the catalytic core - and F(0) - the membrane proton channel. F(1) has five subunits: alpha(3), beta(3), gamma(1), delta(1), epsilon(1). F(0) has four main subunits: a(1), b(1), b'(1) and c(10-14). The alpha and beta chains form an alternating ring which encloses part of the gamma chain. F(1) is attached to F(0) by a central stalk formed by the gamma and epsilon chains, while a peripheral stalk is formed by the delta, b and b' chains.

It localises to the plastid. It is found in the chloroplast thylakoid membrane. F(1)F(0) ATP synthase produces ATP from ADP in the presence of a proton or sodium gradient. F-type ATPases consist of two structural domains, F(1) containing the extramembraneous catalytic core and F(0) containing the membrane proton channel, linked together by a central stalk and a peripheral stalk. During catalysis, ATP synthesis in the catalytic domain of F(1) is coupled via a rotary mechanism of the central stalk subunits to proton translocation. Functionally, component of the F(0) channel, it forms part of the peripheral stalk, linking F(1) to F(0). The protein is ATP synthase subunit b, chloroplastic of Nicotiana sylvestris (Wood tobacco).